We begin with the raw amino-acid sequence, 2642 residues long: Fusarielin synthase FSL1 (2642 aa).

One can recognise a Ketosynthase family 3 (KS3) domain in the interval 6–450 (NEPIAIIGTG…GTNAHAILEA (445 aa)). Active-site for beta-ketoacyl synthase activity residues include cysteine 179, histidine 318, and histidine 370. The interval 566–890 (VFTGQGAQWA…PYTSALVRGK (325 aa)) is malonyl-CoA:ACP transacylase (MAT) domain. The active-site For malonyltransferase activity is the serine 659. The tract at residues 965–1101 (HDLLGIQTAD…GKVCIFLQTE (137 aa)) is N-terminal hotdog fold. The interval 965-1279 (HDLLGIQTAD…SFSPFAAATD (315 aa)) is dehydratase (DH) domain. The PKS/mFAS DH domain occupies 965-1280 (HDLLGIQTAD…FSPFAAATDR (316 aa)). The active-site Proton acceptor; for dehydratase activity is the histidine 997. A C-terminal hotdog fold region spans residues 1126–1280 (MAGIDVERFY…FSPFAAATDR (155 aa)). The active-site Proton donor; for dehydratase activity is aspartate 1189. The methyltransferase (MET) domain stretch occupies residues 1423-1622 (NYLDRYYTHA…GVDTNTPMPD (200 aa)). Residues 2244–2423 (TYWMLGLTGD…GHNAAVIDIS (180 aa)) form a ketoreductase (KR) domain region. The Carrier domain maps to 2556–2635 (QEVTSVLTSC…DLADYILESL (80 aa)). Serine 2595 carries the post-translational modification O-(pantetheine 4'-phosphoryl)serine.

Pantetheine 4'-phosphate is required as a cofactor.

Its pathway is secondary metabolite biosynthesis. In terms of biological role, reducing polyketide synthase; part of the gene cluster that mediates the biosynthesis of fusarielins F, G and H, decaketide compounds with 5 methylations and a decaline core that act as mycoestrogens as they stimulate growth of MCF-7 breast cancer cells. The initial compound in the pathway is produced by the reducing polyketide synthase FSL1. FSL1 lacks an active enoyl reductase (ER) domain and biosynthesis of fusarielins relies on the trans-acting enoyl reductase FSL5, before it is released through hydrolysis catalyzed by the thioesterase FSL2. Fusarielins F, G, and H have a C11=C12 cis double bond and is fully reduced between C10 and C11 and between C12 and C13. FSL3 can be involved in the formation of the C11=C12 cis double bond by moving a hypothetical C10=C11 or C12=C13 trans double bond to form prefusarielin. Prefusarielin is oxygenated at C15 and C16 by the cytochrome P450 monooxygenase FSL4, resulting in fusarielin F, which subsequently is epoxidized into fusarielin G by the same enzyme. The final step in the pathway is a reduction of the carboxylic acid moiety to yield fusarielin H via a still undetermined mechanism. This chain is Fusarielin synthase FSL1, found in Gibberella zeae (strain ATCC MYA-4620 / CBS 123657 / FGSC 9075 / NRRL 31084 / PH-1) (Wheat head blight fungus).